The primary structure comprises 195 residues: Flavin-dependent monooxygenase, reductase subunit HsaB (195 aa).

FAD is bound by residues 42-46 (PVGFA), 48-49 (QS), 63-65 (CPT), 69-70 (RS), and 95-96 (RF). 160 to 163 (FYRG) provides a ligand contact to NAD(+).

Belongs to the non-flavoprotein flavin reductase family. As to quaternary structure, hsaAB monooxygenase consists of an oxygenase component HsaA and a reductase component HsaB.

The enzyme catalyses a reduced flavin + NAD(+) = an oxidized flavin + NADH + 2 H(+). It participates in lipid metabolism; steroid biosynthesis. Functionally, catalyzes the reduction of free flavins (FMN or FAD) by NADH. Subsequently, the reduced flavins diffuse to the HsaA oxygenase subunit. This chain is Flavin-dependent monooxygenase, reductase subunit HsaB (hsaB), found in Rhodococcus jostii (strain RHA1).